The following is a 230-amino-acid chain: NADH dehydrogenase [ubiquinone] iron-sulfur protein 8, mitochondrial (230 aa).

Residues 1–42 (MAAILARKSLSALRSRQLVLAGQAWQQGANTSNGTLLGTRTF) constitute a mitochondrion transit peptide. 4Fe-4S ferredoxin-type domains are found at residues 122–151 (RRYP…IEAE) and 161–190 (TRYD…EGPN). Cys-131, Cys-134, Cys-137, Cys-141, Cys-170, Cys-173, Cys-176, and Cys-180 together coordinate [4Fe-4S] cluster.

This sequence belongs to the complex I 23 kDa subunit family. In terms of assembly, complex I is composed of about 45 different subunits. This is a component of the iron-sulfur (IP) fragment of the enzyme. The cofactor is [4Fe-4S] cluster.

The protein localises to the mitochondrion. It carries out the reaction a ubiquinone + NADH + 5 H(+)(in) = a ubiquinol + NAD(+) + 4 H(+)(out). In terms of biological role, core subunit of the mitochondrial membrane respiratory chain NADH dehydrogenase (Complex I) that is believed to belong to the minimal assembly required for catalysis. Complex I functions in the transfer of electrons from NADH to the respiratory chain. The immediate electron acceptor for the enzyme is believed to be ubiquinone. May donate electrons to ubiquinone. This chain is NADH dehydrogenase [ubiquinone] iron-sulfur protein 8, mitochondrial, found in Nicotiana tabacum (Common tobacco).